We begin with the raw amino-acid sequence, 241 residues long: Probable cobalt-factor III C(17)-methyltransferase (241 aa).

This sequence belongs to the precorrin methyltransferase family.

It carries out the reaction Co(II)-factor III + S-adenosyl-L-methionine + H(+) = Co(II)-factor IV + S-adenosyl-L-homocysteine. It functions in the pathway cofactor biosynthesis; adenosylcobalamin biosynthesis; cob(II)yrinate a,c-diamide from sirohydrochlorin (anaerobic route): step 3/10. Its function is as follows. Methyltransferase that likely catalyzes the ring contraction and methylation of C-17 in cobalt-factor III to form cobalt-factor IV. May also convert cobalt-precorrin-3 to cobalt-precorrin-4. The sequence is that of Probable cobalt-factor III C(17)-methyltransferase (cbiH) from Salmonella typhimurium (strain LT2 / SGSC1412 / ATCC 700720).